The primary structure comprises 445 residues: Phosphoglucosamine mutase (445 aa).

The Phosphoserine intermediate role is filled by Ser102. Positions 102, 241, 243, and 245 each coordinate Mg(2+). At Ser102 the chain carries Phosphoserine.

The protein belongs to the phosphohexose mutase family. Mg(2+) serves as cofactor. Activated by phosphorylation.

The catalysed reaction is alpha-D-glucosamine 1-phosphate = D-glucosamine 6-phosphate. Catalyzes the conversion of glucosamine-6-phosphate to glucosamine-1-phosphate. This is Phosphoglucosamine mutase from Edwardsiella ictaluri (strain 93-146).